Here is a 354-residue protein sequence, read N- to C-terminus: Sphingosine-1-phosphate phosphatase 2 (354 aa).

A run of 4 helical transmembrane segments spans residues 43–63 (YLFR…FLPF), 76–96 (LVVI…ILKW), 115–135 (YGMP…LLIS), and 140–160 (YQYP…LVCL). Residues 91-99 (KDILKWPRP) are phosphatase sequence motif I. The segment at 118-121 (PSTH) is phosphatase sequence motif II. The Proton donor role is filled by H121. Residues 161–172 (SRLYTGMHTVLD) form a phosphatase sequence motif III region. Catalysis depends on H168, which acts as the Nucleophile. 5 helical membrane passes run 173–193 (ILGG…AWTL), 202–222 (PLFP…YPVS), 235–255 (IVAA…FQLV), 273–293 (TDML…ILLV), and 334–354 (TSVG…LGLL).

This sequence belongs to the type 2 lipid phosphate phosphatase family. As to expression, highly expressed in pancreatic islets. Expressed in lung, small interstince, colon, kideny and brain.

It is found in the endoplasmic reticulum membrane. It catalyses the reaction sphinganine 1-phosphate + H2O = sphinganine + phosphate. The enzyme catalyses sphing-4-enine 1-phosphate + H2O = sphing-4-enine + phosphate. It carries out the reaction (4R)-hydroxysphinganine 1-phosphate + H2O = (4R)-hydroxysphinganine + phosphate. In terms of biological role, has specific phosphohydrolase activity towards sphingoid base 1-phosphates. Has high phosphohydrolase activity against dihydrosphingosine-1-phosphate and sphingosine-1-phosphate (S1P) in vitro. Sphingosine-1-phosphate phosphatase activity is needed for efficient recycling of sphingosine into the sphingolipid synthesis pathway. May play a role in attenuating intracellular sphingosine 1-phosphate (S1P) signaling. May play a role in pro-inflammatory signaling. Plays a role in the regulation of pancreatic islet beta-cell endoplasmic reticulum stress and proliferation. This is Sphingosine-1-phosphate phosphatase 2 from Mus musculus (Mouse).